The following is a 360-amino-acid chain: Phenylalanine--tRNA ligase alpha subunit (360 aa).

Glu264 serves as a coordination point for Mg(2+).

It belongs to the class-II aminoacyl-tRNA synthetase family. Phe-tRNA synthetase alpha subunit type 1 subfamily. In terms of assembly, tetramer of two alpha and two beta subunits. The cofactor is Mg(2+).

Its subcellular location is the cytoplasm. The catalysed reaction is tRNA(Phe) + L-phenylalanine + ATP = L-phenylalanyl-tRNA(Phe) + AMP + diphosphate + H(+). The protein is Phenylalanine--tRNA ligase alpha subunit of Streptomyces avermitilis (strain ATCC 31267 / DSM 46492 / JCM 5070 / NBRC 14893 / NCIMB 12804 / NRRL 8165 / MA-4680).